The following is a 375-amino-acid chain: Tyrosine--tRNA ligase (375 aa).

Tyrosine 37, tyrosine 168, glutamine 172, aspartate 175, and glutamine 190 together coordinate L-tyrosine. The short motif at 251–255 (KMSKS) is the 'KMSKS' region element. Residue lysine 254 coordinates ATP.

Belongs to the class-I aminoacyl-tRNA synthetase family. TyrS type 4 subfamily. Homodimer.

The protein resides in the cytoplasm. The catalysed reaction is tRNA(Tyr) + L-tyrosine + ATP = L-tyrosyl-tRNA(Tyr) + AMP + diphosphate + H(+). In terms of biological role, catalyzes the attachment of tyrosine to tRNA(Tyr) in a two-step reaction: tyrosine is first activated by ATP to form Tyr-AMP and then transferred to the acceptor end of tRNA(Tyr). This chain is Tyrosine--tRNA ligase, found in Pyrococcus horikoshii (strain ATCC 700860 / DSM 12428 / JCM 9974 / NBRC 100139 / OT-3).